We begin with the raw amino-acid sequence, 585 residues long: Potassium-transporting ATPase potassium-binding subunit (585 aa).

A run of 12 helical transmembrane segments spans residues 23-43, 85-105, 152-172, 194-214, 275-295, 307-327, 345-365, 367-387, 397-417, 444-464, 502-522, and 547-567; these read GVIIILIYLIIASVLAYILSF, FINLLLFNFFAGLISFLVIMF, FVITGLMFLSAGTGFAASMAF, IFDLILPLTVILTVILILAGI, VEFVSFVIIPLASLISLGIVF, VVMFFFIFDALFAFFGEFAGV, AIGISQSTIFAVGATITSTGA, NAALVSYTPAGIIGVLIGLLL, GVLNIFMYIIFTVFIASLMVG, LLVVIPLGITLMIPHLMSSFV, LDGVLMLLGRYLLMAFQLIIA, and VLLIAAMILIGLLSYFPIIVL.

It belongs to the KdpA family. As to quaternary structure, the system is composed of three essential subunits: KdpA, KdpB and KdpC.

The protein resides in the cell membrane. Part of the high-affinity ATP-driven potassium transport (or Kdp) system, which catalyzes the hydrolysis of ATP coupled with the electrogenic transport of potassium into the cytoplasm. This subunit binds the extracellular potassium ions and delivers the ions to the membrane domain of KdpB through an intramembrane tunnel. In Thermoplasma acidophilum (strain ATCC 25905 / DSM 1728 / JCM 9062 / NBRC 15155 / AMRC-C165), this protein is Potassium-transporting ATPase potassium-binding subunit.